The primary structure comprises 858 residues: M-phase phosphoprotein 8 (858 aa).

The tract at residues 18–55 is disordered; it reads VPDSIGRSPESEGVGAGDEEKDAATKGTVAVGDSEEDG. S51, S85, S136, and S138 each carry phosphoserine. Residues 59 to 118 form the Chromo domain; it reads FEVERILDMKCEGGKNLYKVRWKGYTSEDDTWEPEVHLEDCKEVLLEFRKKLAENKAKAV. The segment at 80–87 is histone H3K9me3 binding; sequence WKGYTSED. Residues 129–175 are disordered; sequence NDIFEADSDSDQQSDTKEDISPRKKKKKIKCKEETSPEDLRKKRTKM. Position 144 is a phosphothreonine (T144). Phosphoserine; by CDK1 occurs at positions 149 and 164. Over residues 159 to 169 the composition is skewed to basic and acidic residues; sequence CKEETSPEDLR. At S188 the chain carries Phosphoserine. Disordered stretches follow at residues 209–234 and 250–300; these read ELKDSKKPKKDEIKETKELKKANKRA and NRKT…DKTA. S267, S271, and S278 each carry phosphoserine. A compositionally biased stretch (acidic residues) spans 273 to 282; that stretch reads ILEDDSEDFI. A compositionally biased stretch (basic and acidic residues) spans 283 to 300; that stretch reads SDNREENQNVRSVRDKTA. Phosphoserine is present on S318. The tract at residues 321-431 is disordered; sequence EDAGTRVRRK…YDLDKEEKAR (111 aa). A compositionally biased stretch (basic and acidic residues) spans 335-357; the sequence is RKFEEPKEIKKLESTNAFLERRA. T385 carries the post-translational modification Phosphothreonine; by CDK1. Residues S392 and S400 each carry the phosphoserine modification. Basic and acidic residues predominate over residues 407 to 431; that stretch reads EKEKKNEPKGKYQKRYDLDKEEKAR. T453 carries the post-translational modification Phosphothreonine. ANK repeat units lie at residues 598-627, 631-660, 664-693, and 697-726; these read TGMTLVMLAAAGGQDDLLRLLITKGAKVNG, NGTTALIHAAEKNFLTTVAILLEAGAFVNV, NGETALMKACKRGNSDIVRLVIECGADCNI, and HQNSALYFAKQCNNVLVYELLKSHLETLSR.

In terms of assembly, homodimer. Interacts (via chromo domain) with histone H3K9me3. Has the highest affinity for H3K9me3, and lesser affinity for H3K9me2 and H3K9me1. Component of the HUSH complex; at least composed of TASOR, PPHLN1 and MPHOSPH8. Interacts with DNMT3, EHMT1 and SETDB1. Interacts with MORC2; the interaction associateS MORC2 with the HUSH complex which recruits MORC2 to heterochromatic loci. Interacts with ZNF638; leading to recruitment of the HUSH complex to unintegrated retroviral DNA. Interacts with TASOR. Post-translationally, phosphorylated in M (mitotic) phase. Phosphorylation by CDK1 promotes dissociation from chromatin. In terms of tissue distribution, expressed in the spermatogonia, spermatocytes and granular cells within the cerebellum.

Its subcellular location is the nucleus. It localises to the chromosome. In terms of biological role, heterochromatin component that specifically recognizes and binds methylated 'Lys-9' of histone H3 (H3K9me) and promotes recruitment of proteins that mediate epigenetic repression. Mediates recruitment of the HUSH complex to H3K9me3 sites: the HUSH complex is recruited to genomic loci rich in H3K9me3 and is required to maintain transcriptional silencing by promoting recruitment of SETDB1, a histone methyltransferase that mediates further deposition of H3K9me3, as well as MORC2. Binds H3K9me and promotes DNA methylation by recruiting DNMT3A to target CpG sites; these can be situated within the coding region of the gene. Mediates down-regulation of CDH1 expression. Also represses L1 retrotransposons in collaboration with MORC2 and, probably, SETDB1, the silencing is dependent of repressive epigenetic modifications, such as H3K9me3 mark. Silencing events often occur within introns of transcriptionally active genes, and lead to the down-regulation of host gene expression. The HUSH complex is also involved in the silencing of unintegrated retroviral DNA by being recruited by ZNF638: some part of the retroviral DNA formed immediately after infection remains unintegrated in the host genome and is transcriptionally repressed. This Mus musculus (Mouse) protein is M-phase phosphoprotein 8.